Here is a 362-residue protein sequence, read N- to C-terminus: Aspartate carbamoyltransferase catalytic subunit (362 aa).

A disordered region spans residues 1–22 (MPKTAMTDSTSKTSTNTASSDM). Over residues 7–20 (TDSTSKTSTNTASS) the composition is skewed to low complexity. Positions 100 and 101 each coordinate carbamoyl phosphate. K128 is an L-aspartate binding site. Carbamoyl phosphate-binding residues include R150, H180, and Q183. L-aspartate-binding residues include R214 and R269. Positions 310 and 311 each coordinate carbamoyl phosphate.

It belongs to the aspartate/ornithine carbamoyltransferase superfamily. ATCase family. As to quaternary structure, heterododecamer (2C3:3R2) of six catalytic PyrB chains organized as two trimers (C3), and six regulatory PyrI chains organized as three dimers (R2).

The enzyme catalyses carbamoyl phosphate + L-aspartate = N-carbamoyl-L-aspartate + phosphate + H(+). It participates in pyrimidine metabolism; UMP biosynthesis via de novo pathway; (S)-dihydroorotate from bicarbonate: step 2/3. In terms of biological role, catalyzes the condensation of carbamoyl phosphate and aspartate to form carbamoyl aspartate and inorganic phosphate, the committed step in the de novo pyrimidine nucleotide biosynthesis pathway. This is Aspartate carbamoyltransferase catalytic subunit from Psychrobacter sp. (strain PRwf-1).